Reading from the N-terminus, the 115-residue chain is Large ribosomal subunit protein bL19 (115 aa).

The protein belongs to the bacterial ribosomal protein bL19 family.

Functionally, this protein is located at the 30S-50S ribosomal subunit interface and may play a role in the structure and function of the aminoacyl-tRNA binding site. The chain is Large ribosomal subunit protein bL19 from Streptococcus uberis (strain ATCC BAA-854 / 0140J).